Consider the following 207-residue polypeptide: ATP synthase subunit b 2 (207 aa).

A helical membrane pass occupies residues 58-78 (LLWLVITFGVFYLLMQKVIAP).

This sequence belongs to the ATPase B chain family. In terms of assembly, F-type ATPases have 2 components, F(1) - the catalytic core - and F(0) - the membrane proton channel. F(1) has five subunits: alpha(3), beta(3), gamma(1), delta(1), epsilon(1). F(0) has three main subunits: a(1), b(2) and c(10-14). The alpha and beta chains form an alternating ring which encloses part of the gamma chain. F(1) is attached to F(0) by a central stalk formed by the gamma and epsilon chains, while a peripheral stalk is formed by the delta and b chains.

The protein localises to the cell inner membrane. F(1)F(0) ATP synthase produces ATP from ADP in the presence of a proton or sodium gradient. F-type ATPases consist of two structural domains, F(1) containing the extramembraneous catalytic core and F(0) containing the membrane proton channel, linked together by a central stalk and a peripheral stalk. During catalysis, ATP synthesis in the catalytic domain of F(1) is coupled via a rotary mechanism of the central stalk subunits to proton translocation. In terms of biological role, component of the F(0) channel, it forms part of the peripheral stalk, linking F(1) to F(0). The b'-subunit is a diverged and duplicated form of b found in plants and photosynthetic bacteria. The protein is ATP synthase subunit b 2 (atpF2) of Rhizobium johnstonii (strain DSM 114642 / LMG 32736 / 3841) (Rhizobium leguminosarum bv. viciae).